The chain runs to 336 residues: MYYPFVRKALFQLDPERAHEFTFQQLRRITGTPFEALVRQKVPAKPVNCMGLTFKNPLGLAAGLDKDGECIDALGAMGFGSIEIGTVTPRPQPGNDKPRLFRLVDAEGLINRMGFNNLGVDNLVENVKKAHYDGVLGINIGKNKDTPVEQGKDDYLICMEKIYAYAGYIAINISSPNTPGLRTLQYGEALDDLLTAIKNKQNDLQAMHHKYVPIAVKIAPDLSEDELIQVADSLVRHNIDGVIATNTTLDRSLVQGMKNCDQTGGLSGRPLQLKSTEIIRRLSLELNGRLPIIGVGGIDSVIAAREKIAAGASLVQIYSGFIFKGPPLIKEIVTHI.

FMN contacts are provided by residues 62-66 and Thr-86; that span reads AGLDK. Lys-66 serves as a coordination point for substrate. 111–115 contacts substrate; it reads NRMGF. FMN-binding residues include Asn-139 and Asn-172. Residue Asn-172 participates in substrate binding. Catalysis depends on Ser-175, which acts as the Nucleophile. Asn-177 is a binding site for substrate. FMN-binding residues include Lys-217 and Thr-245. 246–247 provides a ligand contact to substrate; it reads NT. FMN is bound by residues Gly-268, Gly-297, and 318–319; that span reads YS.

Belongs to the dihydroorotate dehydrogenase family. Type 2 subfamily. As to quaternary structure, monomer. It depends on FMN as a cofactor.

Its subcellular location is the cell membrane. The enzyme catalyses (S)-dihydroorotate + a quinone = orotate + a quinol. The protein operates within pyrimidine metabolism; UMP biosynthesis via de novo pathway; orotate from (S)-dihydroorotate (quinone route): step 1/1. In terms of biological role, catalyzes the conversion of dihydroorotate to orotate with quinone as electron acceptor. The chain is Dihydroorotate dehydrogenase (quinone) from Shigella flexneri serotype 5b (strain 8401).